Here is a 285-residue protein sequence, read N- to C-terminus: Ribosomal protein L11 methyltransferase (285 aa).

The S-adenosyl-L-methionine site is built by Thr-131, Gly-154, Asp-176, and Asn-223.

This sequence belongs to the methyltransferase superfamily. PrmA family.

The protein localises to the cytoplasm. It catalyses the reaction L-lysyl-[protein] + 3 S-adenosyl-L-methionine = N(6),N(6),N(6)-trimethyl-L-lysyl-[protein] + 3 S-adenosyl-L-homocysteine + 3 H(+). In terms of biological role, methylates ribosomal protein L11. This is Ribosomal protein L11 methyltransferase from Brucella abortus (strain S19).